A 323-amino-acid chain; its full sequence is Fos-related antigen 2 (323 aa).

Residues 1 to 27 (MYQDYPGSFDTSSRGSSGSPGHPEPYS) are compositionally biased toward low complexity. The segment at 1-31 (MYQDYPGSFDTSSRGSSGSPGHPEPYSAGAA) is disordered. A bZIP domain is found at 124–187 (EEKRRIRRER…EKLEFMLVAH (64 aa)). A basic motif region spans residues 126 to 128 (KRR). The interval 129-136 (IRRERNKL) is leucine-zipper. Disordered regions lie at residues 194–214 (SPEE…TGAS) and 288–323 (ESPL…LLAL). Over residues 305 to 317 (SSSGDQSSDSLNS) the composition is skewed to low complexity.

It belongs to the bZIP family. Fos subfamily. As to quaternary structure, heterodimer with JUN.

The protein resides in the nucleus. In Gallus gallus (Chicken), this protein is Fos-related antigen 2 (FOSL2).